Consider the following 725-residue polypeptide: Protein ECM27 (725 aa).

The next 12 membrane-spanning stretches (helical) occupy residues 21 to 41 (VTFI…LGIC), 119 to 139 (VLGA…IIMS), 157 to 177 (LLFS…NQVT), 178 to 198 (VLNC…KLTF), 397 to 417 (ISDA…KLSC), 439 to 459 (LPII…CSIL), 470 to 490 (LVYL…TAFI), 526 to 546 (IQII…SLLA), 559 to 579 (ILGL…NSVG), 621 to 641 (LNSM…IGAF), 668 to 688 (FIVS…FFGG), and 704 to 724 (GISM…LELF).

This sequence belongs to the Ca(2+):cation antiporter (CaCA) (TC 2.A.19) family.

It is found in the membrane. This chain is Protein ECM27 (ECM27), found in Saccharomyces cerevisiae (strain ATCC 204508 / S288c) (Baker's yeast).